Reading from the N-terminus, the 240-residue chain is MTEIFSSLYGQPDSQGPAGPSALGFGSGKPQVPQNMGPMCFPHQMMEEGAPVRKPAAMNEPFYLLRELPMENELTGHTNLITHYNLEHAYNKFCGKKVKEKLSNFLPELPGMIDSPGIQDNSSLRSLIEKPPVCNNSFSPLTGAMLTGFRLHTGPLPEQYRLMHIQPPKKKNKHKHKHHRPQDPLPPETPSDSDHKKKKKKKDDDPDRKKKKKDKKKKKNRHSPDHPGMTGAQPSTSSLR.

The span at 1–14 (MTEIFSSLYGQPDS) shows a compositional bias: polar residues. Disordered regions lie at residues 1-29 (MTEI…GSGK) and 168-240 (PKKK…SSLR). 2 stretches are compositionally biased toward basic residues: residues 168–180 (PKKK…KHHR) and 209–221 (KKKK…KKNR).

The protein belongs to the Mediator complex subunit 19 family. Component of the Mediator complex.

The protein resides in the nucleus. Functionally, component of the Mediator complex, a coactivator involved in the regulated transcription of nearly all RNA polymerase II-dependent genes. Mediator functions as a bridge to convey information from gene-specific regulatory proteins to the basal RNA polymerase II transcription machinery. Mediator is recruited to promoters by direct interactions with regulatory proteins and serves as a scaffold for the assembly of a functional preinitiation complex with RNA polymerase II and the general transcription factors. This Danio rerio (Zebrafish) protein is Mediator of RNA polymerase II transcription subunit 19-B (med19b).